The sequence spans 299 residues: Protein tantalus (299 aa).

Residues 16 to 100 (KDNRSPTTNS…RSSTFGARAG (85 aa)) are disordered. Polar residues predominate over residues 20–35 (SPTTNSNLSWQLNQMA). Acidic residues predominate over residues 53 to 69 (ESDDNVSSESHDSDDVD). A compositionally biased stretch (low complexity) spans 84 to 93 (CISGSSRRSS). 2 positions are modified to phosphoserine: S204 and S264.

Binds to DNA in vitro. Interacts directly with Asx. As to expression, ubiquitously expressed in precellularized embryos. Then it decreases at cellular blastoderm to increase again during germ band extension. During germ band extension, it is highly expressed in somatic and visceral mesoderm. Ubiquitously expressed in imaginal disks. In ovary, it is expressed from stage 10.

It is found in the nucleus. The protein localises to the cytoplasm. It localises to the chromosome. In terms of biological role, potential cofactor involved in sensory organ development. Despite its interaction with the Polycomb group protein Asx, it does not regulate the expression of homeotic genes. This is Protein tantalus from Drosophila melanogaster (Fruit fly).